A 157-amino-acid polypeptide reads, in one-letter code: Protein-export protein SecB (157 aa).

The protein belongs to the SecB family. As to quaternary structure, homotetramer, a dimer of dimers. One homotetramer interacts with 1 SecA dimer.

It is found in the cytoplasm. Functionally, one of the proteins required for the normal export of preproteins out of the cell cytoplasm. It is a molecular chaperone that binds to a subset of precursor proteins, maintaining them in a translocation-competent state. It also specifically binds to its receptor SecA. This Shewanella frigidimarina (strain NCIMB 400) protein is Protein-export protein SecB.